The sequence spans 268 residues: Nickel import ATP-binding protein NikE (268 aa).

One can recognise an ABC transporter domain in the interval 4–252; that stretch reads LNVCGLSHHY…SSDAGRVLQN (249 aa). 45-52 serves as a coordination point for ATP; the sequence is GRSGCGKS.

Belongs to the ABC transporter superfamily. Nickel importer (TC 3.A.1.5.3) family. As to quaternary structure, the complex is composed of two ATP-binding proteins (NikD and NikE), two transmembrane proteins (NikB and NikC) and a solute-binding protein (NikA).

The protein resides in the cell inner membrane. It carries out the reaction Ni(2+)(out) + ATP + H2O = Ni(2+)(in) + ADP + phosphate + H(+). Its function is as follows. Part of the ABC transporter complex NikABCDE involved in nickel import. Responsible for energy coupling to the transport system. This chain is Nickel import ATP-binding protein NikE, found in Shigella flexneri serotype 5b (strain 8401).